The sequence spans 365 residues: Phosphatidylcholine:ceramide cholinephosphotransferase 2 (365 aa).

Residues 9 to 50 form a disordered region; sequence LEGHLESQTNDSTNTYTSPTEAVEEEGKNGKGKPKTLSNGLR. The span at 14 to 28 shows a compositional bias: polar residues; the sequence is ESQTNDSTNTYTSPT. 5 helical membrane-spanning segments follow: residues 80–100, 128–148, 159–179, 219–239, and 248–268; these read GIAF…ITVV, FSVS…QWLF, FFFI…VTTL, ILCG…TYLF, and FWWY…CILV. Residue His229 is part of the active site. Active-site residues include His272 and Asp276. The helical transmembrane segment at 273 to 290 threads the bilayer; sequence YTVDVIIAYYITTRLFWW. Over 291 to 365 the chain is Cytoplasmic; it reads YHSMANEKNL…KIGEDNEKST (75 aa). Residues Cys331, Cys332, Cys343, and Cys348 are each lipidated (S-palmitoyl cysteine).

It belongs to the sphingomyelin synthase family. Palmitoylated on Cys-331, Cys-332, Cys-343 and Cys-348; which plays an important role in plasma membrane localization. As to expression, highest expression is detected in cortical bone, followed by vertebrae, kidney and liver. Expression levels are very low in spleen, muscle, heart, brown fat and thymus. Expressed in macrophages.

It localises to the cell membrane. It is found in the golgi apparatus membrane. It catalyses the reaction an N-acylsphing-4-enine + a 1,2-diacyl-sn-glycero-3-phosphocholine = a sphingomyelin + a 1,2-diacyl-sn-glycerol. It carries out the reaction an N-acylsphinganine + a 1,2-diacyl-sn-glycero-3-phosphocholine = an N-acylsphinganine-1-phosphocholine + a 1,2-diacyl-sn-glycerol. The catalysed reaction is an N-acyl-(4R)-4-hydroxysphinganine + a 1,2-diacyl-sn-glycero-3-phosphocholine = an N-acyl-(4R)-4-hydroxysphinganine-phosphocholine + a 1,2-diacyl-sn-glycerol. The enzyme catalyses an N-acylsphing-4-enine + a 1,2-diacyl-sn-glycero-3-phosphoethanolamine = an N-acylsphing-4-enine 1-phosphoethanolamine + a 1,2-diacyl-sn-glycerol. It catalyses the reaction an N-acylsphinganine + a 1,2-diacyl-sn-glycero-3-phosphoethanolamine = an N-acylsphinganine-1-phosphoethanolamine + a 1,2-diacyl-sn-glycerol. It carries out the reaction an N-acyl-(4R)-4-hydroxysphinganine + a 1,2-diacyl-sn-glycero-3-phosphoethanolamine = an N-acyl-(4R)-4-hydroxysphinganine-1-phosphoethanolamine + a 1,2-diacyl-sn-glycerol. The catalysed reaction is 1,2-dihexadecanoyl-sn-glycero-3-phosphocholine + an N-acylsphing-4-enine = 1,2-dihexadecanoyl-sn-glycerol + a sphingomyelin. The enzyme catalyses 1-(9Z-octadecenoyl)-2-acyl-sn-3-glycerol + a sphingomyelin = a 1-(9Z-octadecenoyl)-2-acyl-sn-glycero-3-phosphocholine + an N-acylsphing-4-enine. It catalyses the reaction N-hexadecanoylsphinganine + a 1,2-diacyl-sn-glycero-3-phosphocholine = N-hexadecanoyl-sphinganine-1-phosphocholine + a 1,2-diacyl-sn-glycerol. It carries out the reaction N-hexadecanoyl-(4R)-hydroxysphinganine + a 1,2-diacyl-sn-glycero-3-phosphocholine = N-hexadecanoyl-(4R)-hydroxysphinganine-phosphocholine + a 1,2-diacyl-sn-glycerol. The catalysed reaction is N-hexadecanoylsphinganine + a 1,2-diacyl-sn-glycero-3-phosphoethanolamine = N-hexadecanoyl-sphinganine-1-phosphoethanolamine + a 1,2-diacyl-sn-glycerol. The enzyme catalyses N-hexadecanoyl-(4R)-hydroxysphinganine + a 1,2-diacyl-sn-glycero-3-phosphoethanolamine = N-hexadecanoyl-(4R)-hydroxysphinganine-1-phosphoethanolamine + a 1,2-diacyl-sn-glycerol. It functions in the pathway sphingolipid metabolism. Its function is as follows. Sphingomyelin synthase that primarily contributes to sphingomyelin synthesis and homeostasis at the plasma membrane. Catalyzes the reversible transfer of phosphocholine moiety in sphingomyelin biosynthesis: in the forward reaction transfers phosphocholine head group of phosphatidylcholine (PC) on to ceramide (CER) to form ceramide phosphocholine (sphingomyelin, SM) and diacylglycerol (DAG) as by-product, and in the reverse reaction transfers phosphocholine from SM to DAG to form PC and CER. The direction of the reaction appears to depend on the levels of CER and DAG in the plasma membrane. Does not use free phosphorylcholine or CDP-choline as donors. Can also transfer phosphoethanolamine head group of phosphatidylethanolamine (PE) on to ceramide (CER) to form ceramide phosphoethanolamine (CPE). Regulates receptor-mediated signal transduction via mitogenic DAG and proapoptotic CER, as well as via SM, a structural component of membrane rafts that serve as platforms for signal transduction and protein sorting. To a lesser extent, plays a role in secretory transport via regulation of DAG pool at the Golgi apparatus and its downstream effects on PRKD1. Required for normal bone matrix mineralization. The polypeptide is Phosphatidylcholine:ceramide cholinephosphotransferase 2 (Sgms2) (Mus musculus (Mouse)).